The following is a 504-amino-acid chain: Trifunctional (S)-stylopine synthase/(S)-nandinine synthase/(S)-canadine synthase (504 aa).

A helical membrane pass occupies residues 16–36 (SSTTTTTTILLSLLFTIFIIL). Residue Cys448 participates in heme binding.

It belongs to the cytochrome P450 family. It depends on heme as a cofactor. As to expression, expressed in roots and at lower levels in stems, leaves and plantlets.

The protein resides in the endoplasmic reticulum membrane. The catalysed reaction is (S)-cheilanthifoline + reduced [NADPH--hemoprotein reductase] + O2 = (S)-stylopine + oxidized [NADPH--hemoprotein reductase] + 2 H2O + H(+). The enzyme catalyses (S)-tetrahydrocolumbamine + reduced [NADPH--hemoprotein reductase] + O2 = (S)-canadine + oxidized [NADPH--hemoprotein reductase] + 2 H2O + H(+). It carries out the reaction (S)-scoulerine + reduced [NADPH--hemoprotein reductase] + O2 = (S)-nandinine + oxidized [NADPH--hemoprotein reductase] + 2 H2O + H(+). In terms of biological role, methylenedioxy bridge-forming cytochrome P450 involved in the biosynthesis of isoquinoline alkaloids. Converts (S)-cheilanthifoline to (S)-stylopine, (S)-scoulerine to (S)-nandinine and (S)-tetrahydrocolumbamine to (S)-canadine. Can be involved in both sanguinarine and berberine biosynthesis. Catalyzes an oxidative reaction that does not incorporate oxygen into the product. This Argemone mexicana (Mexican prickly poppy) protein is Trifunctional (S)-stylopine synthase/(S)-nandinine synthase/(S)-canadine synthase.